A 56-amino-acid chain; its full sequence is Small ribosomal subunit protein uS14 (56 aa).

The Zn(2+) site is built by Cys21, Cys24, Cys39, and Cys42.

Belongs to the universal ribosomal protein uS14 family. Component of the 40S small ribosomal subunit. Zn(2+) serves as cofactor.

The protein localises to the cytoplasm. Its subcellular location is the cytosol. The protein resides in the rough endoplasmic reticulum. Its function is as follows. Component of the small ribosomal subunit. The ribosome is a large ribonucleoprotein complex responsible for the synthesis of proteins in the cell. This Hippocampus comes (Tiger tail seahorse) protein is Small ribosomal subunit protein uS14 (rps29).